Consider the following 175-residue polypeptide: 3-hydroxydecanoyl-[acyl-carrier-protein] dehydratase (175 aa).

Residue His-74 is part of the active site.

Belongs to the thioester dehydratase family. FabA subfamily. As to quaternary structure, homodimer.

The protein localises to the cytoplasm. It catalyses the reaction a (3R)-hydroxyacyl-[ACP] = a (2E)-enoyl-[ACP] + H2O. It carries out the reaction (3R)-hydroxydecanoyl-[ACP] = (2E)-decenoyl-[ACP] + H2O. The catalysed reaction is (2E)-decenoyl-[ACP] = (3Z)-decenoyl-[ACP]. Its pathway is lipid metabolism; fatty acid biosynthesis. Functionally, necessary for the introduction of cis unsaturation into fatty acids. Catalyzes the dehydration of (3R)-3-hydroxydecanoyl-ACP to E-(2)-decenoyl-ACP and then its isomerization to Z-(3)-decenoyl-ACP. Can catalyze the dehydratase reaction for beta-hydroxyacyl-ACPs with saturated chain lengths up to 16:0, being most active on intermediate chain length. The sequence is that of 3-hydroxydecanoyl-[acyl-carrier-protein] dehydratase from Alcanivorax borkumensis (strain ATCC 700651 / DSM 11573 / NCIMB 13689 / SK2).